The chain runs to 312 residues: Phospho-N-acetylmuramoyl-pentapeptide-transferase (312 aa).

A run of 9 helical transmembrane segments spans residues 1–21 (MMVV…HYSK), 48–68 (GVAF…FGGI), 76–96 (EVMI…DDFL), 115–135 (FPLQ…LASH), 140–160 (GFMS…FVMV), 165–185 (AFNF…IVLL), 214–234 (VFMG…AYAL), 238–258 (VWLL…VVIQ), and 289–309 (VTLR…WLMG).

This sequence belongs to the glycosyltransferase 4 family. MraY subfamily. Mg(2+) serves as cofactor.

It is found in the cell membrane. The enzyme catalyses UDP-N-acetyl-alpha-D-muramoyl-L-alanyl-gamma-D-glutamyl-meso-2,6-diaminopimeloyl-D-alanyl-D-alanine + di-trans,octa-cis-undecaprenyl phosphate = di-trans,octa-cis-undecaprenyl diphospho-N-acetyl-alpha-D-muramoyl-L-alanyl-D-glutamyl-meso-2,6-diaminopimeloyl-D-alanyl-D-alanine + UMP. The protein operates within cell wall biogenesis; peptidoglycan biosynthesis. Its function is as follows. Catalyzes the initial step of the lipid cycle reactions in the biosynthesis of the cell wall peptidoglycan: transfers peptidoglycan precursor phospho-MurNAc-pentapeptide from UDP-MurNAc-pentapeptide onto the lipid carrier undecaprenyl phosphate, yielding undecaprenyl-pyrophosphoryl-MurNAc-pentapeptide, known as lipid I. The sequence is that of Phospho-N-acetylmuramoyl-pentapeptide-transferase from Deinococcus radiodurans (strain ATCC 13939 / DSM 20539 / JCM 16871 / CCUG 27074 / LMG 4051 / NBRC 15346 / NCIMB 9279 / VKM B-1422 / R1).